The primary structure comprises 406 residues: Dual-specificity RNA methyltransferase RlmN (406 aa).

The Proton acceptor role is filled by Glu119. Positions 125–370 constitute a Radical SAM core domain; it reads DKGRGTLCVS…AMVRRTRGDD (246 aa). Cys132 and Cys375 form a disulfide bridge. 3 residues coordinate [4Fe-4S] cluster: Cys139, Cys143, and Cys146. S-adenosyl-L-methionine-binding positions include 192-193, Ser224, 246-248, and Asn332; these read GE and SLH. Cys375 functions as the S-methylcysteine intermediate in the catalytic mechanism.

It belongs to the radical SAM superfamily. RlmN family. It depends on [4Fe-4S] cluster as a cofactor.

It localises to the cytoplasm. The catalysed reaction is adenosine(2503) in 23S rRNA + 2 reduced [2Fe-2S]-[ferredoxin] + 2 S-adenosyl-L-methionine = 2-methyladenosine(2503) in 23S rRNA + 5'-deoxyadenosine + L-methionine + 2 oxidized [2Fe-2S]-[ferredoxin] + S-adenosyl-L-homocysteine. The enzyme catalyses adenosine(37) in tRNA + 2 reduced [2Fe-2S]-[ferredoxin] + 2 S-adenosyl-L-methionine = 2-methyladenosine(37) in tRNA + 5'-deoxyadenosine + L-methionine + 2 oxidized [2Fe-2S]-[ferredoxin] + S-adenosyl-L-homocysteine. Its function is as follows. Specifically methylates position 2 of adenine 2503 in 23S rRNA and position 2 of adenine 37 in tRNAs. m2A2503 modification seems to play a crucial role in the proofreading step occurring at the peptidyl transferase center and thus would serve to optimize ribosomal fidelity. The chain is Dual-specificity RNA methyltransferase RlmN from Xylella fastidiosa (strain 9a5c).